Consider the following 470-residue polypeptide: Protein naked cuticle homolog 1 (470 aa).

Disordered stretches follow at residues 1–21 (MGKLHSKPAAVCKRRESPEGD) and 90–114 (PPEKTDGLGSGDEKKMERVSEPCPG). Glycine 2 is lipidated: N-myristoyl glycine. Basic and acidic residues predominate over residues 92 to 109 (EKTDGLGSGDEKKMERVS). The interaction with DVL1, DVL2 and DVL3 stretch occupies residues 125–190 (QCDVSMEEDS…LRVKLTVAPD (66 aa)). Positions 131 to 166 (EEDSRQEWTFTLYDFDNNGKVTREDITSLLHTIYEV) constitute an EF-hand domain. The Ca(2+) site is built by aspartate 144, aspartate 146, asparagine 148, lysine 150, and aspartate 155. A compositionally biased stretch (polar residues) spans 192 to 205 (SQSKRSVLVNQADL). Disordered stretches follow at residues 192–228 (SQSKRSVLVNQADLQSARPRAETKPTEDLRSWEKKQR), 271–314 (QFGP…QGVD), 337–357 (GTQDGSKHFVRSPKAQGKSVG), and 446–470 (GQPVQRHEHHHHHEHHHHYHHFYQT). The span at 210–227 (PRAETKPTEDLRSWEKKQ) shows a compositional bias: basic and acidic residues. Residues 271–281 (QFGPGSPSVAQ) are compositionally biased toward polar residues. The segment covering 452–470 (HEHHHHHEHHHHYHHFYQT) has biased composition (basic residues).

It belongs to the NKD family. Interacts with DVL1, DVL2, DVL3 and PPP2R3A. Expressed in colon, heart, kidney, leukocyte, liver, lung, ovary, pancreas, placenta, prostate, skeletal muscle, small intestine and spleen.

The protein localises to the cell membrane. The protein resides in the cytoplasm. Functionally, cell autonomous antagonist of the canonical Wnt signaling pathway. May activate a second Wnt signaling pathway that controls planar cell polarity. In Homo sapiens (Human), this protein is Protein naked cuticle homolog 1 (NKD1).